An 80-amino-acid polypeptide reads, in one-letter code: Cell division protein ZapB (80 aa).

Residues 3 to 80 are a coiled coil; it reads FEVLEQLESK…ALLGKMDEVE (78 aa).

Belongs to the ZapB family. As to quaternary structure, homodimer. The ends of the coiled-coil dimer bind to each other, forming polymers. Interacts with FtsZ.

Its subcellular location is the cytoplasm. Its function is as follows. Non-essential, abundant cell division factor that is required for proper Z-ring formation. It is recruited early to the divisome by direct interaction with FtsZ, stimulating Z-ring assembly and thereby promoting cell division earlier in the cell cycle. Its recruitment to the Z-ring requires functional FtsA or ZipA. The protein is Cell division protein ZapB of Vibrio parahaemolyticus serotype O3:K6 (strain RIMD 2210633).